Consider the following 62-residue polypeptide: Defensin-like protein A (62 aa).

A signal peptide spans 1 to 26 (MRCVVLFMVSCLLIVLLINHFEEVEA). C42 and C52 form a disulfide bridge.

Belongs to the DEFL family.

Its subcellular location is the secreted. Its function is as follows. Truncated and inactivated form of SCRA, a protein involved in male-mediated self-incompatibility when active. Most A.thaliana cultivars contain such an inactive form and thus, are self-fertiles. In Arabidopsis thaliana (Mouse-ear cress), this protein is Defensin-like protein A (SCRA).